A 329-amino-acid chain; its full sequence is DNA-directed RNA polymerase subunit alpha (329 aa).

The tract at residues 1 to 234 (MQSAVNEFLT…QQLAVFVDLE (234 aa)) is alpha N-terminal domain (alpha-NTD). Positions 248-329 (IDPVLLRPVD…WPPASLKNND (82 aa)) are alpha C-terminal domain (alpha-CTD).

This sequence belongs to the RNA polymerase alpha chain family. As to quaternary structure, homodimer. The RNAP catalytic core consists of 2 alpha, 1 beta, 1 beta' and 1 omega subunit. When a sigma factor is associated with the core the holoenzyme is formed, which can initiate transcription.

It catalyses the reaction RNA(n) + a ribonucleoside 5'-triphosphate = RNA(n+1) + diphosphate. Functionally, DNA-dependent RNA polymerase catalyzes the transcription of DNA into RNA using the four ribonucleoside triphosphates as substrates. In Saccharophagus degradans (strain 2-40 / ATCC 43961 / DSM 17024), this protein is DNA-directed RNA polymerase subunit alpha.